A 172-amino-acid chain; its full sequence is SsrA-binding protein (172 aa).

This sequence belongs to the SmpB family.

The protein resides in the cytoplasm. Functionally, required for rescue of stalled ribosomes mediated by trans-translation. Binds to transfer-messenger RNA (tmRNA), required for stable association of tmRNA with ribosomes. tmRNA and SmpB together mimic tRNA shape, replacing the anticodon stem-loop with SmpB. tmRNA is encoded by the ssrA gene; the 2 termini fold to resemble tRNA(Ala) and it encodes a 'tag peptide', a short internal open reading frame. During trans-translation Ala-aminoacylated tmRNA acts like a tRNA, entering the A-site of stalled ribosomes, displacing the stalled mRNA. The ribosome then switches to translate the ORF on the tmRNA; the nascent peptide is terminated with the 'tag peptide' encoded by the tmRNA and targeted for degradation. The ribosome is freed to recommence translation, which seems to be the essential function of trans-translation. This chain is SsrA-binding protein, found in Dehalococcoides mccartyi (strain ATCC BAA-2266 / KCTC 15142 / 195) (Dehalococcoides ethenogenes (strain 195)).